A 114-amino-acid polypeptide reads, in one-letter code: Probable acid stress chaperone HdeA (114 aa).

Residues 1–26 (MIKALFNKNTALAAVTILALSGGAMA) form the signal peptide. A disulfide bond links cysteine 46 and cysteine 94.

The protein belongs to the HdeA family.

Its subcellular location is the periplasm. In terms of biological role, required for optimal acid stress protection. Exhibits a chaperone-like activity only at low pH by suppressing non-specifically the aggregation of denaturated periplasmic proteins. The sequence is that of Probable acid stress chaperone HdeA from Brucella suis biovar 1 (strain 1330).